Consider the following 441-residue polypeptide: MTDSGWKIILAPEYASEVRKFEEHGTVLSSKDQFHGDIPGFEPFNAGSLIELQLVKYMAKKSCSKSAGHVFSSLSLESGRVVQEMCSDDPNWRPIQAESTAVRMIAHLTAAVFAGRQLCRNSEWIDITIQYSLTAMVAAEQLWRWPRLARRMAARFLPSCRLLSAQVQRANELVSTTSQARKDETTATQQAGMEQSTSYHDGLEWMEEYARGRPYRPGVTQLAVTLGAVDTTKDLLMQVLYDIAGKSDLMDALRREIVAIVSEHGWTKTTIVNLQLMDSMIKESQRLKPVGISKLSGIRRTAASDIHLSDGGIVPKNVPFEISNMHMWDDADLYPDPLSFQADRFLRLRQVPGHEATAQLASLSADHLGWGLGKNACPGRFFVAMEVKVLLCHLILKYDWRLEDGCISEVRRYGTFLSADPEGTLLVRRRREEVDLDGPLV.

Residues 175–195 (STTSQARKDETTATQQAGMEQ) are disordered. A compositionally biased stretch (polar residues) spans 186–195 (TATQQAGMEQ). Residue Cys377 coordinates heme.

The protein belongs to the cytochrome P450 family. Heme is required as a cofactor.

It carries out the reaction campesine D + reduced [NADPH--hemoprotein reductase] + O2 = campesine G + oxidized [NADPH--hemoprotein reductase] + 2 H2O + H(+). It participates in alkaloid biosynthesis. Functionally, cytochrome P450 monooxygenase; part of the gene cluster that mediates the biosynthesis of campesine G, a dimeric indole piperazine alkaloid that shows good insecticidal activity Galleria mellonella. Within the pathway, cpsC catalyzes regioselective dehydrogenation reaction towards C2-N1 of the (2H)-indole ring of campesine D to yield the final product, campesine G. The non-canonical non-ribosomal peptide synthetase cpsA catalyzes the first steps of the pathway by producing L-tryptophanal and L-valinal from their respective amino-acids. These products condensate spontaneously to form trypyl-valyl pyrazine also known as didehydrocampesine A. The NmrA-like family domain-containing oxidoreductase cpsB is the next enzyme in cps pathway and reduces the unstable didehydrocampesine A to campesine A. The methyltransferase cpsF and the acetyltransferase cpsE both recognize N13 of piperazine ring to carry out methylation and acetylation of campesine A to produce campesine C and B, respectively. The cytochrome P450 monooxygenase cpsD then acts as a dimerase that catalyzes oxidative heterocoupling between campesine B and C to produce heterodimers with unexpected 6/5/6/6/6/6/5/6 eight-ring scaffold called campesine D. Finally,the cytochrome P450 monooxygenase cpsC is a regioselective dehydrogenase that catalyzes dehydrogenation reaction towards C2-N1 to produce campesine G. The sequence is that of Cytochrome P450 monooxygenase cpsC from Aspergillus campestris (strain IBT 28561).